The chain runs to 594 residues: Adenine deaminase 1 (594 aa).

It belongs to the metallo-dependent hydrolases superfamily. Adenine deaminase family. Mn(2+) serves as cofactor.

It carries out the reaction adenine + H2O + H(+) = hypoxanthine + NH4(+). This chain is Adenine deaminase 1, found in Jannaschia sp. (strain CCS1).